Reading from the N-terminus, the 1863-residue chain is Transient receptor potential cation channel subfamily M member 7 (1863 aa).

Residue methionine 1 is modified to N-acetylmethionine. Residues 1-850 (MSQKSWIEST…ITRKFYAFYH (850 aa)) lie on the Cytoplasmic side of the membrane. Serine 101 carries the phosphoserine modification. Over residues 544-555 (NRRSGRNTSSST) the composition is skewed to low complexity. A disordered region spans residues 544-574 (NRRSGRNTSSSTPQLRKSHETFGNRADKKEK). Residues 560-573 (KSHETFGNRADKKE) are compositionally biased toward basic and acidic residues. A helical transmembrane segment spans residues 851–876 (APIVKFWFNTLAYLGFLMLYTFVVLV). Residues 877–882 (KMEQLP) lie on the Extracellular side of the membrane. Residues 883 to 904 (SVQEWIVIAYIFTYAIEKVREV) traverse the membrane as a helical segment. Over 905–923 (FMSEAGKISQKIKVWFSDY) the chain is Cytoplasmic. Residues 924-943 (FNVSDTIAIISFFVGFGLRF) form a helical membrane-spanning segment. Residues 944-956 (GAKWNYINAYDNH) lie on the Extracellular side of the membrane. A helical membrane pass occupies residues 957-980 (VFVAGRLIYCLNIIFWYVRLLDFL). The Cytoplasmic segment spans residues 981-999 (AVNQQAGPYVMMIGKMVAN). A helical transmembrane segment spans residues 1000–1023 (MFYIVVIMALVLLSFGVPRKAILY). At 1024 to 1025 (PH) the chain is on the extracellular side. An intramembrane region (pore-forming) is located at residues 1026–1066 (EEPSWSLAKDIVFHPYWMIFGEVYAYEIDVCANDSTLPTIC). Residues 1067–1069 (GPG) are Extracellular-facing. Residues 1070 to 1098 (TWLTPFLQAVYLFVQYIIMVNLLIAFFNN) traverse the membrane as a helical segment. Residues 1099–1863 (VYLQVKAISN…EATNSVRLML (765 aa)) are Cytoplasmic-facing. 3 S-palmitoyl cysteine lipidation sites follow: cysteine 1143, cysteine 1144, and cysteine 1146. Threonine 1163 bears the Phosphothreonine mark. Phosphoserine is present on residues serine 1191, serine 1193, serine 1224, serine 1255, and serine 1258. A coiled-coil region spans residues 1198 to 1250 (RVTFERVEQMSIQIKEVGDRVNYIKRSLQSLDSQIGHLQDLSALTVDTLKTLT). Threonine 1265 carries the post-translational modification Phosphothreonine. Residues serine 1300, serine 1357, serine 1360, serine 1385, serine 1386, serine 1389, serine 1394, serine 1395, and serine 1403 each carry the phosphoserine modification. A disordered region spans residues 1380–1418 (NQKLGSSPNSSPHMSSPPTKFSVSTPSQPSCKSHLESTT). A compositionally biased stretch (low complexity) spans 1385–1397 (SSPNSSPHMSSPP). Polar residues predominate over residues 1398–1410 (TKFSVSTPSQPSC). Residue threonine 1404 is modified to Phosphothreonine. Phosphoserine is present on residues serine 1406 and serine 1445. Position 1454 is a phosphothreonine (threonine 1454). Residue serine 1455 is modified to Phosphoserine. Residues threonine 1466 and threonine 1470 each carry the phosphothreonine modification. Serine 1491, serine 1498, serine 1502, serine 1511, serine 1525, and serine 1531 each carry phosphoserine. The tract at residues 1498–1539 (SRRASTEDSPEVDSKAALLPDWLRDRPSNREMPSEGGTLNGL) is disordered. The span at 1519–1530 (WLRDRPSNREMP) shows a compositional bias: basic and acidic residues. At threonine 1535 the chain carries Phosphothreonine. Serine 1541 is modified (phosphoserine). Phosphothreonine is present on threonine 1549. 2 positions are modified to phosphoserine: serine 1565 and serine 1567. Position 1581 is a phosphothreonine (threonine 1581). The region spanning 1592–1822 (ILNNSMSSWS…CCRKLKLPDL (231 aa)) is the Alpha-type protein kinase domain. Phosphoserine occurs at positions 1596 and 1613. Glycine 1619, glycine 1620, leucine 1621, arginine 1622, and lysine 1646 together coordinate ADP. Residue serine 1658 is modified to Phosphoserine. Residue threonine 1683 is modified to Phosphothreonine. Glutamate 1718, glutamate 1719, and methionine 1721 together coordinate ADP. Residue histidine 1751 participates in Zn(2+) binding. The Proton acceptor role is filled by aspartate 1765. Aspartate 1775 is a binding site for ADP. Serine 1777 carries the phosphoserine modification. Positions 1808, 1810, and 1814 each coordinate Zn(2+). Phosphothreonine is present on threonine 1828. The segment at 1838-1863 (ESSDLNLQSGNSTKESEATNSVRLML) is disordered. Residues 1841–1863 (DLNLQSGNSTKESEATNSVRLML) show a composition bias toward polar residues. A phosphoserine mark is found at serine 1846, serine 1849, and serine 1858.

In the C-terminal section; belongs to the protein kinase superfamily. Alpha-type protein kinase family. ALPK subfamily. The protein in the N-terminal section; belongs to the transient receptor (TC 1.A.4) family. LTrpC subfamily. TRPM7 sub-subfamily. As to quaternary structure, homodimer. Homotetramer. Forms heteromers with TRPM6; heteromeric channels are functionally different from the homomeric channels. Interacts with PLCB1. The cofactor is Zn(2+). Post-translationally, palmitoylated; palmitoylation at Cys-1143, Cys-1144 and Cys-1146 promotes TRPM7 trafficking from the Golgi to the surface membrane. Autophosphorylated; autophosphorylation regulates TRPM7 kinase activity towards its substrates. In terms of processing, the C-terminal kinase domain can be cleaved from the channel segment in a cell-type-specific fashion. TRPM7 is cleaved by caspase-8, dissociating the kinase from the ion-conducting pore. The cleaved kinase fragments (M7CKs) can translocate to the cell nucleus and binds chromatin-remodeling complex proteins in a Zn(2+)-dependent manner to ultimately phosphorylate specific Ser/Thr residues of histones. Found to be expressed in brain and skeletal muscle, with stronger signals in kidney, heart, liver and spleen.

It localises to the cell membrane. Its subcellular location is the cytoplasmic vesicle membrane. It is found in the nucleus. It catalyses the reaction L-seryl-[protein] + ATP = O-phospho-L-seryl-[protein] + ADP + H(+). The catalysed reaction is L-threonyl-[protein] + ATP = O-phospho-L-threonyl-[protein] + ADP + H(+). It carries out the reaction Mg(2+)(in) = Mg(2+)(out). The enzyme catalyses Ca(2+)(in) = Ca(2+)(out). It catalyses the reaction Zn(2+)(in) = Zn(2+)(out). Channel displays constitutive activity. Channel activity is negatively regulated by cytosolic Mg(2+), Mg-ATP and low intracellular pH. Resting free cytosolic Mg(2+) and Mg-ATP concentrations seem to be sufficient to block native TRPM7 channel activity. TRPM7 channel activity is highly dependent on membrane levels of phosphatidylinositol 4,5 bisphosphate (PIP2). PIP2 hydrolysis negatively regulates TRPM7 channel activity. TRPM7 kinase activity does not affect channel activity. The kinase activity is controlled through the autophosphorylation of a serine/threonine-rich region located N-terminal to the catalytic domain. In terms of biological role, bifunctional protein that combines an ion channel with an intrinsic kinase domain, enabling it to modulate cellular functions either by conducting ions through the pore or by phosphorylating downstream proteins via its kinase domain. The channel is highly permeable to divalent cations, specifically calcium (Ca2+), magnesium (Mg2+) and zinc (Zn2+) and mediates their influx. Controls a wide range of biological processes such as Ca2(+), Mg(2+) and Zn(2+) homeostasis, vesicular Zn(2+) release channel and intracellular Ca(2+) signaling, embryonic development, immune responses, cell motility, proliferation and differentiation. The C-terminal alpha-kinase domain autophosphorylates cytoplasmic residues of TRPM7. TRPM7 phosphorylates SMAD2, suggesting that TRPM7 kinase may play a role in activating SMAD signaling pathways. In vitro, TRPM7 kinase phosphorylates ANXA1 (annexin A1), myosin II isoforms and a variety of proteins with diverse cellular functions. Its function is as follows. The cleaved channel exhibits substantially higher current and potentiates Fas receptor signaling. Functionally, the C-terminal kinase domain can be cleaved from the channel segment in a cell-type-specific fashion. In immune cells, the TRPM7 kinase domain is clipped from the channel domain by caspases in response to Fas-receptor stimulation. The cleaved kinase fragments can translocate to the nucleus, and bind chromatin-remodeling complex proteins in a Zn(2+)-dependent manner to ultimately phosphorylate specific Ser/Thr residues of histones known to be functionally important for cell differentiation and embryonic development. This is Transient receptor potential cation channel subfamily M member 7 (Trpm7) from Mus musculus (Mouse).